A 201-amino-acid polypeptide reads, in one-letter code: Glycerol-3-phosphate acyltransferase (201 aa).

A run of 5 helical transmembrane segments spans residues 10–30 (MLIGALIFGYVLGSIPFGLIL), 60–80 (LAAATLILDALKGTAAALIAA), 86–106 (AAIAAGFGAFIGHLFPVWIGF), 116–136 (LGVLIGLAWAGALVFAAAWIV), and 166–186 (ALAALFAIMTVIVFIKHRANI).

This sequence belongs to the PlsY family. In terms of assembly, probably interacts with PlsX.

The protein localises to the cell inner membrane. It catalyses the reaction an acyl phosphate + sn-glycerol 3-phosphate = a 1-acyl-sn-glycero-3-phosphate + phosphate. It functions in the pathway lipid metabolism; phospholipid metabolism. Catalyzes the transfer of an acyl group from acyl-phosphate (acyl-PO(4)) to glycerol-3-phosphate (G3P) to form lysophosphatidic acid (LPA). This enzyme utilizes acyl-phosphate as fatty acyl donor, but not acyl-CoA or acyl-ACP. This Brucella canis (strain ATCC 23365 / NCTC 10854 / RM-666) protein is Glycerol-3-phosphate acyltransferase.